We begin with the raw amino-acid sequence, 542 residues long: Chaperonin GroEL (542 aa).

ATP contacts are provided by residues 29–32 (TLGP), lysine 50, 86–90 (DGTTT), glycine 415, and aspartate 495.

This sequence belongs to the chaperonin (HSP60) family. As to quaternary structure, forms a cylinder of 14 subunits composed of two heptameric rings stacked back-to-back. Interacts with the co-chaperonin GroES.

It localises to the cytoplasm. It carries out the reaction ATP + H2O + a folded polypeptide = ADP + phosphate + an unfolded polypeptide.. Together with its co-chaperonin GroES, plays an essential role in assisting protein folding. The GroEL-GroES system forms a nano-cage that allows encapsulation of the non-native substrate proteins and provides a physical environment optimized to promote and accelerate protein folding. The sequence is that of Chaperonin GroEL from Flavobacterium psychrophilum (strain ATCC 49511 / DSM 21280 / CIP 103535 / JIP02/86).